Here is a 605-residue protein sequence, read N- to C-terminus: Elongation factor 4 (605 aa).

In terms of domain architecture, tr-type G spans 4-186; it reads SATRNFCIIA…AIVARVPAPK (183 aa). Residues 16-21 and 133-136 each bind GTP; these read DHGKST and NKID.

It belongs to the TRAFAC class translation factor GTPase superfamily. Classic translation factor GTPase family. LepA subfamily.

The protein resides in the cell membrane. The enzyme catalyses GTP + H2O = GDP + phosphate + H(+). Required for accurate and efficient protein synthesis under certain stress conditions. May act as a fidelity factor of the translation reaction, by catalyzing a one-codon backward translocation of tRNAs on improperly translocated ribosomes. Back-translocation proceeds from a post-translocation (POST) complex to a pre-translocation (PRE) complex, thus giving elongation factor G a second chance to translocate the tRNAs correctly. Binds to ribosomes in a GTP-dependent manner. This Dehalococcoides mccartyi (strain ATCC BAA-2266 / KCTC 15142 / 195) (Dehalococcoides ethenogenes (strain 195)) protein is Elongation factor 4.